Consider the following 402-residue polypeptide: Sulfate adenylyltransferase (402 aa).

This sequence belongs to the sulfate adenylyltransferase family.

The enzyme catalyses sulfate + ATP + H(+) = adenosine 5'-phosphosulfate + diphosphate. Its pathway is sulfur metabolism; hydrogen sulfide biosynthesis; sulfite from sulfate: step 1/3. The polypeptide is Sulfate adenylyltransferase (Ruthia magnifica subsp. Calyptogena magnifica).